Consider the following 620-residue polypeptide: Protein translocase subunit SecD (620 aa).

6 helical membrane-spanning segments follow: residues 10 to 30 (YLLI…NLYP), 464 to 484 (LWGM…FGVI), 488 to 507 (ALAF…GATL), 511 to 533 (GIAG…FSRI), 555 to 575 (FTAI…LYAM), and 582 to 602 (GFAV…IMVT).

Belongs to the SecD/SecF family. SecD subfamily. Forms a complex with SecF. Part of the essential Sec protein translocation apparatus which comprises SecA, SecYEG and auxiliary proteins SecDF-YajC and YidC.

Its subcellular location is the cell inner membrane. Functionally, part of the Sec protein translocase complex. Interacts with the SecYEG preprotein conducting channel. SecDF uses the proton motive force (PMF) to complete protein translocation after the ATP-dependent function of SecA. The polypeptide is Protein translocase subunit SecD (Pseudomonas aeruginosa (strain ATCC 15692 / DSM 22644 / CIP 104116 / JCM 14847 / LMG 12228 / 1C / PRS 101 / PAO1)).